The sequence spans 576 residues: Proline--tRNA ligase (576 aa).

Belongs to the class-II aminoacyl-tRNA synthetase family. ProS type 1 subfamily. In terms of assembly, homodimer.

Its subcellular location is the cytoplasm. The enzyme catalyses tRNA(Pro) + L-proline + ATP = L-prolyl-tRNA(Pro) + AMP + diphosphate. In terms of biological role, catalyzes the attachment of proline to tRNA(Pro) in a two-step reaction: proline is first activated by ATP to form Pro-AMP and then transferred to the acceptor end of tRNA(Pro). As ProRS can inadvertently accommodate and process non-cognate amino acids such as alanine and cysteine, to avoid such errors it has two additional distinct editing activities against alanine. One activity is designated as 'pretransfer' editing and involves the tRNA(Pro)-independent hydrolysis of activated Ala-AMP. The other activity is designated 'posttransfer' editing and involves deacylation of mischarged Ala-tRNA(Pro). The misacylated Cys-tRNA(Pro) is not edited by ProRS. The protein is Proline--tRNA ligase of Thiobacillus denitrificans (strain ATCC 25259 / T1).